A 123-amino-acid polypeptide reads, in one-letter code: Protein Wnt-3b (123 aa).

Residue serine 1 is the site of O-palmitoleoyl serine; by PORCN attachment. Cysteines 89 and 104 form a disulfide. Asparagine 90 carries an N-linked (GlcNAc...) asparagine glycan.

The protein belongs to the Wnt family. Post-translationally, palmitoleoylation is required for efficient binding to frizzled receptors. Depalmitoleoylation leads to Wnt signaling pathway inhibition.

It localises to the secreted. Its subcellular location is the extracellular space. The protein resides in the extracellular matrix. Ligand for members of the frizzled family of seven transmembrane receptors. Probable developmental protein. May be a signaling molecule which affects the development of discrete regions of tissues. Is likely to signal over only few cell diameters. This Meleagris gallopavo (Wild turkey) protein is Protein Wnt-3b (WNT3B).